The sequence spans 106 residues: L-rhamnose mutarotase (106 aa).

Residue tyrosine 20 participates in substrate binding. The active-site Proton donor is the histidine 24. Residues tyrosine 43 and 78 to 79 (WW) each bind substrate.

It belongs to the rhamnose mutarotase family. Homodimer.

The protein localises to the cytoplasm. It carries out the reaction alpha-L-rhamnose = beta-L-rhamnose. The protein operates within carbohydrate metabolism; L-rhamnose metabolism. Involved in the anomeric conversion of L-rhamnose. The polypeptide is L-rhamnose mutarotase (Rhizobium johnstonii (strain DSM 114642 / LMG 32736 / 3841) (Rhizobium leguminosarum bv. viciae)).